We begin with the raw amino-acid sequence, 194 residues long: Peptidyl-tRNA hydrolase (194 aa).

His17 provides a ligand contact to tRNA. His22 (proton acceptor) is an active-site residue. TRNA contacts are provided by Phe68, Asn70, and Asn116.

The protein belongs to the PTH family. As to quaternary structure, monomer.

The protein resides in the cytoplasm. It catalyses the reaction an N-acyl-L-alpha-aminoacyl-tRNA + H2O = an N-acyl-L-amino acid + a tRNA + H(+). Its function is as follows. Hydrolyzes ribosome-free peptidyl-tRNAs (with 1 or more amino acids incorporated), which drop off the ribosome during protein synthesis, or as a result of ribosome stalling. Functionally, catalyzes the release of premature peptidyl moieties from peptidyl-tRNA molecules trapped in stalled 50S ribosomal subunits, and thus maintains levels of free tRNAs and 50S ribosomes. This chain is Peptidyl-tRNA hydrolase, found in Xanthomonas oryzae pv. oryzae (strain MAFF 311018).